The chain runs to 286 residues: Bifunctional protein FolD (286 aa).

NADP(+) is bound by residues 166-168 and Ile232; that span reads GAS.

It belongs to the tetrahydrofolate dehydrogenase/cyclohydrolase family. As to quaternary structure, homodimer.

The enzyme catalyses (6R)-5,10-methylene-5,6,7,8-tetrahydrofolate + NADP(+) = (6R)-5,10-methenyltetrahydrofolate + NADPH. The catalysed reaction is (6R)-5,10-methenyltetrahydrofolate + H2O = (6R)-10-formyltetrahydrofolate + H(+). Its pathway is one-carbon metabolism; tetrahydrofolate interconversion. Catalyzes the oxidation of 5,10-methylenetetrahydrofolate to 5,10-methenyltetrahydrofolate and then the hydrolysis of 5,10-methenyltetrahydrofolate to 10-formyltetrahydrofolate. The protein is Bifunctional protein FolD of Shewanella piezotolerans (strain WP3 / JCM 13877).